The primary structure comprises 200 residues: LHFPL tetraspan subfamily member 7 protein (200 aa).

4 helical membrane passes run 5–27 (VWVA…PAWF), 68–88 (VSAV…IFLL), 113–133 (AATA…SPFI), and 150–170 (LGWG…LPII).

It belongs to the TMEM211 family.

The protein resides in the membrane. The protein is LHFPL tetraspan subfamily member 7 protein of Homo sapiens (Human).